A 62-amino-acid chain; its full sequence is Small ribosomal subunit protein eS27 (62 aa).

Zn(2+) contacts are provided by cysteine 17, cysteine 20, cysteine 36, and cysteine 39. The C4-type zinc finger occupies 17–39 (CPDCENEQTIFDRACTPVDCIVC).

The protein belongs to the eukaryotic ribosomal protein eS27 family. Part of the 30S ribosomal subunit. It depends on Zn(2+) as a cofactor.

The protein is Small ribosomal subunit protein eS27 of Methanospirillum hungatei JF-1 (strain ATCC 27890 / DSM 864 / NBRC 100397 / JF-1).